Consider the following 935-residue polypeptide: Transmembrane channel-like protein 1 (935 aa).

2 disordered regions span residues 1 to 21 and 37 to 204; these read MPRHKLIASESDVSIEVDEGK and ERGK…LGSL. 5 stretches are compositionally biased toward basic and acidic residues: residues 37-47, 54-79, 109-136, 152-163, and 172-184; these read ERGKIKQASRD, RNGETRRKASEKRTNEGESKKAEKKH, DKSSKEKKNMKNEKNKTLKLEEEKEKDV, NHEKTKQHLKEE, and PETTSESESKSES. 10 helical membrane passes run 303–340, 392–423, 480–510, 523–550, 555–589, 633–670, 690–710, 714–736, 751–774, and 818–851; these read SSVASYFIFLRWMYGINMILFGLTFGLVMVPEALMGKP, RMPLSYFLVGVGTVAYSYMVVIRTMARNANEE, LTRFLRVLANFLVLCCLAGSGYLIYFVVRRS, WWERNEVNMVMSLLGMFCPMLFDVISTL, PRIALQWQLGRIFALFLGNLYTFIIALMDAIQLKR, WETMVGQEFVRLIISDTMTTYITLLIGDFMRAVLVRFL, VSGNVLGLIFNQGMIWMGAFY, LPALNLLRLHVSMYLQCWAVMCC, NFYMAMLLVILFLSTLPAIYTIVS, and LVLPFLLLLVLAIYYLQSTSKTYKRVNMELKKKL. The segment covering 874 to 886 has biased composition (basic and acidic residues); the sequence is EQARKAGEQRRNS. Positions 874 to 935 are disordered; sequence EQARKAGEQR…QQPQKNSKKR (62 aa). Polar residues-rich tracts occupy residues 899 to 919 and 926 to 935; these read SHVSSSHTSRPPASRGHTSSG and QQPQKNSKKR.

It belongs to the TMC family. Interacts specifically with isoform CD3 of PCDH15A (via cytoplasmic domain). As to expression, in adults, expression is restricted to the hair cells of inner ear and lateral line organ. Expressed at higher levels in the larval lateral-line neuromasts than in the larval inner ear. Expressed in the sensory hair cell patches of the ear at 4 days post fertilization (dpf).

Its subcellular location is the cell membrane. It carries out the reaction Ca(2+)(in) = Ca(2+)(out). Pore-forming subunit of the mechanotransducer (MET) non-selective cation channel complex located at the tips of hair-cell stereocilia. Highly permeable to calcium and likely transports monovalent cations. This Danio rerio (Zebrafish) protein is Transmembrane channel-like protein 1.